A 436-amino-acid polypeptide reads, in one-letter code: Serine protease hepsin (436 aa).

The tract at residues 1-29 (MAKEDEEPGAHRGGSTCSRPQPGKGGRTA) is disordered. At 1–38 (MAKEDEEPGAHRGGSTCSRPQPGKGGRTAACCSRPKVA) the chain is on the cytoplasmic side. Residues 39–59 (ALIVGTLLFLTGIGAASWAIV) form a helical; Signal-anchor for type II membrane protein membrane-spanning segment. Over 60 to 436 (TILLQSDQEP…SEASGMVTQP (377 aa)) the chain is Extracellular. Positions 73 to 170 (VQLSPGDSRL…RGRFLTATCQ (98 aa)) constitute an SRCR domain. 8 disulfides stabilise this stretch: Cys96-Cys159, Cys109-Cys169, Cys138-Cys157, Cys172-Cys296, Cys207-Cys223, Cys310-Cys378, Cys341-Cys357, and Cys368-Cys400. Residue Asn131 is glycosylated (N-linked (GlcNAc...) asparagine). The 243-residue stretch at 182–424 (IVGGQDSSLG…FREWIFKAIK (243 aa)) folds into the Peptidase S1 domain. Residues His222 and Asp276 each act as charge relay system in the active site. Catalysis depends on Ser372, which acts as the Charge relay system.

The protein belongs to the peptidase S1 family. Detected in kidney, in thick ascending tubule epithelial cells (at protein level). Detected in kidney and liver.

It localises to the apical cell membrane. The protein resides in the cell membrane. It is found in the secreted. It carries out the reaction Cleavage after basic amino-acid residues, with Arg strongly preferred to Lys.. Serine protease that cleaves extracellular substrates, and contributes to the proteolytic processing of growth factors, such as HGF and MST1/HGFL. Plays a role in cell growth and maintenance of cell morphology. Plays a role in the proteolytic processing of ACE2. Mediates the proteolytic cleavage of urinary UMOD that is required for UMOD polymerization. This Mus musculus (Mouse) protein is Serine protease hepsin (Hpn).